The chain runs to 336 residues: tRNA N6-adenosine threonylcarbamoyltransferase (336 aa).

Residues H111, H115, and Y132 each coordinate Fe cation. Substrate is bound by residues 132-136 (YLSGG), D164, D185, and S264. D292 serves as a coordination point for Fe cation.

Belongs to the KAE1 / TsaD family. Requires Fe(2+) as cofactor.

It localises to the cytoplasm. The catalysed reaction is L-threonylcarbamoyladenylate + adenosine(37) in tRNA = N(6)-L-threonylcarbamoyladenosine(37) in tRNA + AMP + H(+). Its function is as follows. Required for the formation of a threonylcarbamoyl group on adenosine at position 37 (t(6)A37) in tRNAs that read codons beginning with adenine. Is probably involved in the transfer of the threonylcarbamoyl moiety of threonylcarbamoyl-AMP (TC-AMP) to the N6 group of A37. The chain is tRNA N6-adenosine threonylcarbamoyltransferase from Sulfurisphaera tokodaii (strain DSM 16993 / JCM 10545 / NBRC 100140 / 7) (Sulfolobus tokodaii).